Consider the following 205-residue polypeptide: uncharacterized protein (205 aa).

Residues 72 to 114 form a disordered region; that stretch reads ARVSPYGYESDSENEEYTRISSATSSNVLTDSPTTTQDDPTGR. Positions 90–100 are enriched in polar residues; the sequence is RISSATSSNVL. Low complexity predominate over residues 101 to 110; sequence TDSPTTTQDD.

This is an uncharacterized protein from Equus caballus (Horse).